The primary structure comprises 499 residues: Pyruvate kinase (499 aa).

Arginine 50 is a binding site for substrate. Residues asparagine 52, serine 54, aspartate 84, and threonine 85 each coordinate K(+). 52–55 is an ATP binding site; sequence NFSH. Arginine 91 contributes to the ATP binding site. Glutamate 241 lines the Mg(2+) pocket. Residues glycine 264, aspartate 265, and threonine 297 each contribute to the substrate site. A Mg(2+)-binding site is contributed by aspartate 265.

The protein belongs to the pyruvate kinase family. Homotetramer. It depends on Mg(2+) as a cofactor. K(+) is required as a cofactor.

The enzyme catalyses pyruvate + ATP = phosphoenolpyruvate + ADP + H(+). It participates in carbohydrate degradation; glycolysis; pyruvate from D-glyceraldehyde 3-phosphate: step 5/5. Its activity is regulated as follows. Activated by fructose 2,6-bisphosphate, activated by the effector in a non cooperative manner. In Leishmania mexicana, this protein is Pyruvate kinase (PYK).